Here is a 351-residue protein sequence, read N- to C-terminus: Cell shape-determining protein MreB (351 aa).

ATP contacts are provided by residues 20 to 22 (TAN), 169 to 171 (GGT), 217 to 220 (ERIK), and 299 to 302 (GGAL).

Belongs to the FtsA/MreB family. Forms polymers.

It localises to the cytoplasm. Its function is as follows. Forms membrane-associated dynamic filaments that are essential for cell shape determination. Acts by regulating cell wall synthesis and cell elongation, and thus cell shape. A feedback loop between cell geometry and MreB localization may maintain elongated cell shape by targeting cell wall growth to regions of negative cell wall curvature. This Haemophilus influenzae (strain ATCC 51907 / DSM 11121 / KW20 / Rd) protein is Cell shape-determining protein MreB.